The sequence spans 773 residues: Beta-D-xylosidase 3 (773 aa).

The N-terminal stretch at 1-23 (MASRNRALFSVSTLFLCFIVCIS) is a signal peptide. A glycan (N-linked (GlcNAc...) asparagine) is linked at Asn131. Asp298 is a catalytic residue. N-linked (GlcNAc...) asparagine glycosylation is found at Asn349, Asn432, and Asn770.

The protein belongs to the glycosyl hydrolase 3 family. As to expression, expressed in flowers and siliques, in the early stage of seed formation and not at seed maturation. Detected exclusively in the endosperm of very young seeds when the embryo is at the globular stage.

Its subcellular location is the secreted. The protein localises to the extracellular space. It is found in the extracellular matrix. The enzyme catalyses Hydrolysis of terminal non-reducing alpha-L-arabinofuranoside residues in alpha-L-arabinosides.. Its function is as follows. Involved in the hydrolysis of arabinan. Can hydrolyze (1,3)-alpha-, (1,2)-alpha-linked side group residues and non-reducing terminal L-arabinofuranose residues of debranched (1,5)-alpha-L-arabinan backbone. Also acts as a beta-D-xylosidase, releasing D-xylose from arabinoxylan and xylan. The polypeptide is Beta-D-xylosidase 3 (BXL3) (Arabidopsis thaliana (Mouse-ear cress)).